A 201-amino-acid chain; its full sequence is 3-isopropylmalate dehydratase small subunit (201 aa).

It belongs to the LeuD family. LeuD type 1 subfamily. Heterodimer of LeuC and LeuD.

It carries out the reaction (2R,3S)-3-isopropylmalate = (2S)-2-isopropylmalate. The protein operates within amino-acid biosynthesis; L-leucine biosynthesis; L-leucine from 3-methyl-2-oxobutanoate: step 2/4. In terms of biological role, catalyzes the isomerization between 2-isopropylmalate and 3-isopropylmalate, via the formation of 2-isopropylmaleate. The protein is 3-isopropylmalate dehydratase small subunit of Shewanella baltica (strain OS155 / ATCC BAA-1091).